The primary structure comprises 347 residues: Druantia protein DruD (347 aa).

It is found in the cytoplasm. In terms of biological role, component of antiviral defense system Druantia type I, composed of DruA, DruB, DruC, DruD and DruE. Expression of Druantia in E.coli (strain MG1655) confers resistance to phage lambda, SECphi18, SECphi27 and T4. The chain is Druantia protein DruD from Escherichia coli (strain UMEA 4076-1).